We begin with the raw amino-acid sequence, 618 residues long: DNA mismatch repair protein MutL (618 aa).

Low complexity predominate over residues E367–G381. Positions E367–G402 are disordered. A compositionally biased stretch (gly residues) spans G382–S392.

Belongs to the DNA mismatch repair MutL/HexB family.

Its function is as follows. This protein is involved in the repair of mismatches in DNA. It is required for dam-dependent methyl-directed DNA mismatch repair. May act as a 'molecular matchmaker', a protein that promotes the formation of a stable complex between two or more DNA-binding proteins in an ATP-dependent manner without itself being part of a final effector complex. The chain is DNA mismatch repair protein MutL from Salmonella dublin (strain CT_02021853).